The following is a 511-amino-acid chain: Probable endopeptidase p60 (511 aa).

A signal peptide spans 1-27 (MNMKKATIVSAAGIAVTAFAAPSVVSA). A LysM 1 domain is found at 28–71 (NTVVVASGDTLWGIASKTGTTVDQLKQLNKLDSDRIVPGQKLTI). The SH3b domain occupies 78-142 (KVEKSVSATW…VNGKYLSDAK (65 aa)). The 44-residue stretch at 175-218 (STYKVKSGDTIWALSVKYGVPVQKLIEWNNLSSSSIYVGQTIAV) folds into the LysM 2 domain. Low complexity-rich tracts occupy residues 229-257 (TVKQ…QAKP) and 264-282 (KPAV…AKPA). The disordered stretch occupies residues 229–291 (TVKQAAPAKV…AVEQKASTPA (63 aa)). The region spanning 297-341 (ATYKVQNGDSLGKIASLFKVSVADLTNWNNLNATITIYAGQELSV) is the LysM 3 domain. Composition is skewed to low complexity over residues 347–362 (KPKP…SKPA) and 372–390 (TNTT…NTSQ). Residues 347-390 (KPKPAAPAKPAVSKPATSTPAKVTPTNTTNNSTPTTNVNNNTSQ) form a disordered region. In terms of domain architecture, NlpC/P60 spans 393-511 (SASFSALYAE…GQYLVGFGRV (119 aa)). Catalysis depends on Cys423, which acts as the Nucleophile. His473 (proton acceptor) is an active-site residue. Asp485 is an active-site residue.

The protein belongs to the peptidase C40 family.

This major extracellular protein may be involved in the invasion of non-professional phagocytic cells by Listeria. This is Probable endopeptidase p60 (iap) from Listeria grayi (Listeria murrayi).